The primary structure comprises 573 residues: Lauric acid 10-hydroxylase (573 aa).

A run of 2 helical transmembrane segments spans residues 3-23 (YVNI…LMSL) and 298-318 (LFPT…LLIF). Position 516 (cysteine 516) interacts with heme.

The protein belongs to the cytochrome P450 family. The cofactor is heme. As to expression, mostly expressed in flowers and leaves and, at low levels, in roots and stems.

The protein localises to the endoplasmic reticulum membrane. The catalysed reaction is an omega-methyl-medium-chain fatty acid + reduced [NADPH--hemoprotein reductase] + O2 = an omega-hydroxy-medium-chain fatty acid + oxidized [NADPH--hemoprotein reductase] + H2O + H(+). It catalyses the reaction decanoate + reduced [NADPH--hemoprotein reductase] + O2 = 10-hydroxydecanoate + oxidized [NADPH--hemoprotein reductase] + H2O + H(+). The enzyme catalyses dodecanoate + reduced [NADPH--hemoprotein reductase] + O2 = 12-hydroxydodecanoate + oxidized [NADPH--hemoprotein reductase] + H2O + H(+). It functions in the pathway lipid metabolism; fatty acid metabolism. Functionally, cytochrome P450 hydroxylase catalyzing the conversion of decanoate (capric acid) and dodecanoate (lauric acid) to their corresponding omega-hydroxy metabolites, 10-hydroxydecanoate and 12-hydroxydodecanoate, respectively; these hydroxylated components affect plant growth, including reducing root elongation. In Petunia hybrida (Petunia), this protein is Lauric acid 10-hydroxylase.